The chain runs to 135 residues: C-type Lectin CRL (135 aa).

4 disulfides stabilise this stretch: cysteine 3–cysteine 14, cysteine 31–cysteine 131, cysteine 38–cysteine 133, and cysteine 106–cysteine 123. Residues 10-132 (MNGLCYKIFN…CESKDAFLCQ (123 aa)) enclose the C-type lectin domain. 5 residues coordinate Ca(2+): glutamine 96, aspartate 98, glutamate 104, asparagine 119, and aspartate 120. The Galactose-binding signature appears at 96–98 (QPD).

It belongs to the true venom lectin family. In terms of assembly, homodimer; disulfide-linked. Expressed by the venom gland.

Its subcellular location is the secreted. Its function is as follows. Beta-galactoside and N-acetylgalactosamine (GalNAc) specific C-type lectin. This chain is C-type Lectin CRL, found in Crotalus ruber ruber (Red diamond rattlesnake).